The primary structure comprises 371 residues: Chaperone protein DnaJ (371 aa).

Residues 4–68 form the J domain; the sequence is DYYKILGVSK…QKRAAYDRFG (65 aa). The CR-type zinc-finger motif lies at 134–212; that stretch reads GIEKNISFSS…CHGMGRCHKQ (79 aa). The Zn(2+) site is built by Cys147, Cys150, Cys164, Cys167, Cys186, Cys189, Cys200, and Cys203. CXXCXGXG motif repeat units follow at residues 147–154, 164–171, 186–193, and 200–207; these read CDTCHGSG, CDACGGVG, CHKCKGNG, and CKKCHGMG.

This sequence belongs to the DnaJ family. As to quaternary structure, homodimer. Zn(2+) serves as cofactor.

The protein localises to the cytoplasm. Functionally, participates actively in the response to hyperosmotic and heat shock by preventing the aggregation of stress-denatured proteins and by disaggregating proteins, also in an autonomous, DnaK-independent fashion. Unfolded proteins bind initially to DnaJ; upon interaction with the DnaJ-bound protein, DnaK hydrolyzes its bound ATP, resulting in the formation of a stable complex. GrpE releases ADP from DnaK; ATP binding to DnaK triggers the release of the substrate protein, thus completing the reaction cycle. Several rounds of ATP-dependent interactions between DnaJ, DnaK and GrpE are required for fully efficient folding. Also involved, together with DnaK and GrpE, in the DNA replication of plasmids through activation of initiation proteins. The sequence is that of Chaperone protein DnaJ from Rickettsia akari (strain Hartford).